Reading from the N-terminus, the 149-residue chain is Extracellular protease inhibitor 1 (149 aa).

The first 16 residues, 1-16 (MKSALLFTLVVAAVHA), serve as a signal peptide directing secretion. Kazal-like domains are found at residues 29–86 (ESNE…SSTG) and 88–141 (QPPS…ACVG). 2 disulfide bridges follow: Cys-35-Cys-65 and Cys-39-Cys-58. Asn-67 is a glycosylation site (N-linked (GlcNAc...) asparagine). Cystine bridges form between Cys-94–Cys-124, Cys-98–Cys-117, and Cys-106–Cys-139.

Interacts with host subtilisin-like protease P69B.

Its subcellular location is the secreted. In terms of biological role, secreted effector that interacts with and inhibits the pathogenesis-related P69B subtilisin-like serine protease of host tomato. Inhibition of host proteases by a pathogen extracellular protease inhibitor forms a specific type of defense-counterdefense mechanism between plants and microbial pathogens. The sequence is that of Extracellular protease inhibitor 1 from Phytophthora infestans (Potato late blight agent).